The primary structure comprises 398 residues: Succinate--CoA ligase [ADP-forming] subunit beta (398 aa).

The region spanning 9–254 (KRLLHEYGAP…ISEEDPKEIE (246 aa)) is the ATP-grasp domain. ATP contacts are provided by residues lysine 46, 53–55 (GRG), glutamate 109, alanine 112, and glutamate 117. Residues asparagine 209 and aspartate 223 each coordinate Mg(2+). Substrate-binding positions include asparagine 274 and 331-333 (GIM).

It belongs to the succinate/malate CoA ligase beta subunit family. Heterotetramer of two alpha and two beta subunits. It depends on Mg(2+) as a cofactor.

The enzyme catalyses succinate + ATP + CoA = succinyl-CoA + ADP + phosphate. It carries out the reaction GTP + succinate + CoA = succinyl-CoA + GDP + phosphate. It functions in the pathway carbohydrate metabolism; tricarboxylic acid cycle; succinate from succinyl-CoA (ligase route): step 1/1. Functionally, succinyl-CoA synthetase functions in the citric acid cycle (TCA), coupling the hydrolysis of succinyl-CoA to the synthesis of either ATP or GTP and thus represents the only step of substrate-level phosphorylation in the TCA. The beta subunit provides nucleotide specificity of the enzyme and binds the substrate succinate, while the binding sites for coenzyme A and phosphate are found in the alpha subunit. The protein is Succinate--CoA ligase [ADP-forming] subunit beta of Bartonella bacilliformis (strain ATCC 35685 / KC583 / Herrer 020/F12,63).